Consider the following 222-residue polypeptide: Probable GTP-binding protein EngB (222 aa).

An EngB-type G domain is found at 23–217 (NASEIVFLGR…REEIVKYTLG (195 aa)). GTP is bound by residues 31–38 (GRSNVGKS), 57–61 (GKTQL), 82–85 (DLPG), 152–155 (TKAD), and 191–193 (FSA). Residues S38 and T59 each coordinate Mg(2+).

It belongs to the TRAFAC class TrmE-Era-EngA-EngB-Septin-like GTPase superfamily. EngB GTPase family. Mg(2+) serves as cofactor.

Its function is as follows. Necessary for normal cell division and for the maintenance of normal septation. In Helicobacter hepaticus (strain ATCC 51449 / 3B1), this protein is Probable GTP-binding protein EngB.